The primary structure comprises 135 residues: Crossover junction endodeoxyribonuclease Hje (135 aa).

3 residues coordinate Mg(2+): glutamate 10, aspartate 39, and glutamate 52.

Belongs to the Holliday junction resolvase Hjc family. Hje subfamily. Homodimer. Mg(2+) is required as a cofactor.

The catalysed reaction is Endonucleolytic cleavage at a junction such as a reciprocal single-stranded crossover between two homologous DNA duplexes (Holliday junction).. Functionally, a structure-specific endonuclease that resolves Holliday junction (HJ) intermediates during genetic recombination. Acts only on 4-way DNA junctions in a sequence non-specific manner; introduces paired nicks in opposing strands 2 bases 3' of the point of strand exchange only on continuous strands of 4-way junction DNA. Cleaves both mobile and immobile junctions. Plays a more direct role in DNA repair than Hjc. Overexpression of this protein decreases the growth rate, and leads to genomic instability, and global transcriptomic changes. In Saccharolobus islandicus (strain REY15A) (Sulfolobus islandicus), this protein is Crossover junction endodeoxyribonuclease Hje.